Here is a 279-residue protein sequence, read N- to C-terminus: Large ribosomal subunit protein uL2 (279 aa).

Disordered regions lie at residues 1–59 (MGIR…GGHK) and 224–279 (VAMN…KNKR). 2 stretches are compositionally biased toward basic residues: residues 50-59 (TTRHKGGGHK) and 269-279 (VRRRRTGKNKR).

It belongs to the universal ribosomal protein uL2 family. In terms of assembly, part of the 50S ribosomal subunit. Forms a bridge to the 30S subunit in the 70S ribosome.

In terms of biological role, one of the primary rRNA binding proteins. Required for association of the 30S and 50S subunits to form the 70S ribosome, for tRNA binding and peptide bond formation. It has been suggested to have peptidyltransferase activity; this is somewhat controversial. Makes several contacts with the 16S rRNA in the 70S ribosome. This chain is Large ribosomal subunit protein uL2, found in Arthrobacter sp. (strain FB24).